The following is a 1310-amino-acid chain: Zinc finger protein 521 (1310 aa).

The segment covering 1–10 has biased composition (basic residues); sequence MSRRKQAKPR. Positions 1 to 46 are disordered; that stretch reads MSRRKQAKPRSLKDPNCKLEDTSEDGESPDCKKRQEEGDELEEEEA. Basic and acidic residues predominate over residues 11-21; sequence SLKDPNCKLED. The C2H2-type 1; degenerate zinc finger occupies 48–68; sequence HSCDSCLQVFESLSDITEHKI. Positions 82 to 106 are disordered; that stretch reads DPTCSWPASSPSSKDQASPIHGEGF. The segment covering 87–97 has biased composition (polar residues); that stretch reads WPASSPSSKDQ. 7 consecutive C2H2-type zinc fingers follow at residues 119–141, 147–169, 175–197, 203–225, 247–270, 282–305, and 311–333; these read YPCQ…EQSH, FKCT…IKLH, YHCS…LKTH, YKCA…MQVH, QKCS…AECH, LQCM…EQIH, and NSCN…MDSH. The C2H2-type 9; degenerate zinc-finger motif lies at 404-428; it reads YSCIYCSKQLFSSLAVLQIHLKTMH. C2H2-type zinc fingers lie at residues 436-459, 476-499, and 512-535; these read HICQ…KQVH, YQCN…RSSH, and FFCP…RQVH. The segment at 559-584 adopts a C2H2-type 13; atypical zinc-finger fold; the sequence is YSCSYCTNSPIFNSVLKLNKHIKENH. 7 C2H2-type zinc fingers span residues 633–655, 663–685, 693–716, 721–744, 751–774, 782–804, and 808–831; these read YICN…LKTH, LTCP…VTIH, YICE…LDMH, FRCT…AVKH, YRCT…KHNH, HKCI…ITTH, and YNCK…REKH. The segment at 885–907 adopts a C2H2-type 21; degenerate zinc-finger fold; that stretch reads YGCDICGAAYTMESLLQNHQLRD. C2H2-type zinc fingers lie at residues 929–951, 958–980, and 1019–1041; these read YKCN…MQTH, YMCP…KVTH, and FRCV…GTFH. The segment at 1064 to 1082 adopts a C2H2-type 25; degenerate zinc-finger fold; that stretch reads YKCASCLKEFRSKQDLVKL. 5 consecutive C2H2-type zinc fingers follow at residues 1138–1161, 1194–1216, 1224–1246, 1255–1278, and 1285–1308; these read TRCS…QTIH, YQCI…VANH, HECK…LIEH, FKCP…FSAH, and YDCA…MSQH.

It belongs to the krueppel C2H2-type zinc-finger protein family.

Its subcellular location is the nucleus. Functionally, transcription factor that can both act as an activator or a repressor depending on the context. Involved in BMP signaling and in the regulation of the immature compartment of the hematopoietic system. This is Zinc finger protein 521 (znf521) from Xenopus laevis (African clawed frog).